Consider the following 218-residue polypeptide: Nucleoid occlusion factor SlmA (218 aa).

One can recognise an HTH tetR-type domain in the interval 30–90 (ERRQQVLTVL…ALIEHIESTL (61 aa)). Positions 53-72 (TTARLAKEVGVSEAALYRYF) form a DNA-binding region, H-T-H motif.

The protein belongs to the nucleoid occlusion factor SlmA family. In terms of assembly, homodimer. Interacts with FtsZ.

It is found in the cytoplasm. The protein localises to the nucleoid. Its function is as follows. Required for nucleoid occlusion (NO) phenomenon, which prevents Z-ring formation and cell division over the nucleoid. Acts as a DNA-associated cell division inhibitor that binds simultaneously chromosomal DNA and FtsZ, and disrupts the assembly of FtsZ polymers. SlmA-DNA-binding sequences (SBS) are dispersed on non-Ter regions of the chromosome, preventing FtsZ polymerization at these regions. This is Nucleoid occlusion factor SlmA from Haemophilus influenzae (strain PittGG).